The sequence spans 424 residues: 5,5'-dehydrodivanillate O-demethylase oxygenase subunit (424 aa).

One can recognise a Rieske domain in the interval 27–135 (WHPIGGESEF…VRALGGLLWA (109 aa)). [2Fe-2S] cluster is bound by residues C68, H70, C87, and H90. Residues H181, H186, and D306 each contribute to the Fe cation site.

This sequence belongs to the bacterial ring-hydroxylating dioxygenase alpha subunit family. As to quaternary structure, homotrimer. The three-component monooxygenase is composed of an oxygenase (LigXa), a ferredoxin (LigXc) and a ferredoxin reductase (LigXd). [2Fe-2S] cluster serves as cofactor. It depends on Fe cation as a cofactor.

It catalyses the reaction 5,5'-dehydrodivanillate + NADH + O2 + H(+) = 2,2',3-trihydroxy-3'-methoxy-5,5'-dicarboxybiphenyl + formaldehyde + NAD(+) + H2O. Functionally, involved in the catabolism of 5,5'-dehydrodivanillate (DDVA), an intermediate in the biodegradation of lignin. Part of a three-component monooxygenase that catalyzes the O-demethylation of DDVA, leading to the formation of 2,2',3-trihydroxy-3'-methoxy-5,5'-dicarboxybiphenyl (OH-DDVA). This is 5,5'-dehydrodivanillate O-demethylase oxygenase subunit from Sphingobium sp. (strain NBRC 103272 / SYK-6).